A 240-amino-acid chain; its full sequence is Pyridoxine 5'-phosphate synthase (240 aa).

Residue Asn-7 participates in 3-amino-2-oxopropyl phosphate binding. 9 to 10 lines the 1-deoxy-D-xylulose 5-phosphate pocket; that stretch reads DH. Position 18 (Arg-18) interacts with 3-amino-2-oxopropyl phosphate. The active-site Proton acceptor is the His-43. Arg-45 and His-50 together coordinate 1-deoxy-D-xylulose 5-phosphate. The active-site Proton acceptor is Glu-70. Thr-100 contacts 1-deoxy-D-xylulose 5-phosphate. His-191 functions as the Proton donor in the catalytic mechanism. 3-amino-2-oxopropyl phosphate contacts are provided by residues Gly-192 and 213-214; that span reads GH.

The protein belongs to the PNP synthase family. As to quaternary structure, homooctamer; tetramer of dimers.

Its subcellular location is the cytoplasm. It carries out the reaction 3-amino-2-oxopropyl phosphate + 1-deoxy-D-xylulose 5-phosphate = pyridoxine 5'-phosphate + phosphate + 2 H2O + H(+). It functions in the pathway cofactor biosynthesis; pyridoxine 5'-phosphate biosynthesis; pyridoxine 5'-phosphate from D-erythrose 4-phosphate: step 5/5. In terms of biological role, catalyzes the complicated ring closure reaction between the two acyclic compounds 1-deoxy-D-xylulose-5-phosphate (DXP) and 3-amino-2-oxopropyl phosphate (1-amino-acetone-3-phosphate or AAP) to form pyridoxine 5'-phosphate (PNP) and inorganic phosphate. In Gloeothece citriformis (strain PCC 7424) (Cyanothece sp. (strain PCC 7424)), this protein is Pyridoxine 5'-phosphate synthase.